A 475-amino-acid polypeptide reads, in one-letter code: Ribulose bisphosphate carboxylase large chain (475 aa).

The propeptide occupies 1-2 (MS). P3 is subject to N-acetylproline. Positions 123 and 173 each coordinate substrate. K175 functions as the Proton acceptor in the catalytic mechanism. Position 177 (K177) interacts with substrate. 3 residues coordinate Mg(2+): K201, D203, and E204. Position 201 is an N6-carboxylysine (K201). The active-site Proton acceptor is H294. Residues R295, H327, and S379 each contribute to the substrate site.

Belongs to the RuBisCO large chain family. Type I subfamily. As to quaternary structure, heterohexadecamer of 8 large chains and 8 small chains; disulfide-linked. The disulfide link is formed within the large subunit homodimers. It depends on Mg(2+) as a cofactor. Post-translationally, the disulfide bond which can form in the large chain dimeric partners within the hexadecamer appears to be associated with oxidative stress and protein turnover.

Its subcellular location is the plastid. It localises to the chloroplast. It carries out the reaction 2 (2R)-3-phosphoglycerate + 2 H(+) = D-ribulose 1,5-bisphosphate + CO2 + H2O. The enzyme catalyses D-ribulose 1,5-bisphosphate + O2 = 2-phosphoglycolate + (2R)-3-phosphoglycerate + 2 H(+). In terms of biological role, ruBisCO catalyzes two reactions: the carboxylation of D-ribulose 1,5-bisphosphate, the primary event in carbon dioxide fixation, as well as the oxidative fragmentation of the pentose substrate in the photorespiration process. Both reactions occur simultaneously and in competition at the same active site. The protein is Ribulose bisphosphate carboxylase large chain of Welwitschia mirabilis (Tree tumbo).